A 72-amino-acid polypeptide reads, in one-letter code: Small ribosomal subunit protein eS17 (72 aa).

This sequence belongs to the eukaryotic ribosomal protein eS17 family.

This Nanoarchaeum equitans (strain Kin4-M) protein is Small ribosomal subunit protein eS17.